Here is an 850-residue protein sequence, read N- to C-terminus: Trimethylamine-N-oxide reductase (850 aa).

The tat-type signal signal peptide spans 1-39 (MKNKDSLHVSRRRFLAQLGGLTVAGMLGPSLLTPRSARA). S191 is a binding site for Mo-bis(molybdopterin guanine dinucleotide).

This sequence belongs to the prokaryotic molybdopterin-containing oxidoreductase family. It depends on Mo-bis(molybdopterin guanine dinucleotide) as a cofactor. In terms of processing, predicted to be exported by the Tat system. The position of the signal peptide cleavage has not been experimentally proven.

The protein localises to the periplasm. The enzyme catalyses trimethylamine + 2 Fe(III)-[cytochrome c] + H2O = trimethylamine N-oxide + 2 Fe(II)-[cytochrome c] + 3 H(+). Reduces trimethylamine-N-oxide (TMAO) into trimethylamine; an anaerobic reaction coupled to energy-yielding reactions. The chain is Trimethylamine-N-oxide reductase (torA) from Salmonella typhi.